The chain runs to 446 residues: Maltoporin (446 aa).

The N-terminal stretch at 1-25 (MMITLRKLPLAVAVAAGVMSAQAMA) is a signal peptide.

The protein belongs to the porin LamB (TC 1.B.3) family. In terms of assembly, homotrimer formed of three 18-stranded antiparallel beta-barrels, containing three independent channels.

Its subcellular location is the cell outer membrane. The catalysed reaction is beta-maltose(in) = beta-maltose(out). Functionally, involved in the transport of maltose and maltodextrins. The protein is Maltoporin of Escherichia coli (strain K12 / MC4100 / BW2952).